The chain runs to 142 residues: Small ribosomal subunit protein uS12 (142 aa).

It belongs to the universal ribosomal protein uS12 family. Part of the 30S ribosomal subunit.

Functionally, with S4 and S5 plays an important role in translational accuracy. Located at the interface of the 30S and 50S subunits. This Thermoplasma volcanium (strain ATCC 51530 / DSM 4299 / JCM 9571 / NBRC 15438 / GSS1) protein is Small ribosomal subunit protein uS12.